The primary structure comprises 102 residues: Large ribosomal subunit protein bL28 (102 aa).

Positions 1–20 (MSNSCDLTGHGWQNGNMVSH) are enriched in polar residues. Residues 1–27 (MSNSCDLTGHGWQNGNMVSHSNRKTKK) are disordered.

This sequence belongs to the bacterial ribosomal protein bL28 family.

This Neorickettsia sennetsu (strain ATCC VR-367 / Miyayama) (Ehrlichia sennetsu) protein is Large ribosomal subunit protein bL28.